A 111-amino-acid polypeptide reads, in one-letter code: Phosphoribosyl-ATP pyrophosphatase (111 aa).

Belongs to the PRA-PH family.

The protein localises to the cytoplasm. It catalyses the reaction 1-(5-phospho-beta-D-ribosyl)-ATP + H2O = 1-(5-phospho-beta-D-ribosyl)-5'-AMP + diphosphate + H(+). It participates in amino-acid biosynthesis; L-histidine biosynthesis; L-histidine from 5-phospho-alpha-D-ribose 1-diphosphate: step 2/9. The polypeptide is Phosphoribosyl-ATP pyrophosphatase (Azotobacter vinelandii (strain DJ / ATCC BAA-1303)).